The sequence spans 303 residues: uncharacterized protein (303 aa).

The next 6 helical transmembrane spans lie at 12–32, 81–101, 117–137, 174–194, 208–228, and 265–286; these read GLPI…SGIL, ISSV…VLEF, ALAG…FDVI, CIAM…TCMS, IISG…LDVV, and FFKG…SWAA. Solcar repeat units lie at residues 17 to 105, 111 to 195, and 206 to 293; these read SPMY…FKSK, DRPL…CMSF, and SHII…GKEI.

The protein belongs to the mitochondrial carrier (TC 2.A.29) family.

The protein resides in the mitochondrion inner membrane. This is an uncharacterized protein from Schizosaccharomyces pombe (strain 972 / ATCC 24843) (Fission yeast).